Consider the following 214-residue polypeptide: Protein GrpE (214 aa).

Positions 1-13 (MKHTSEPTSQPDT) are enriched in polar residues. Residues 1 to 61 (MKHTSEPTSQ…AAVAEATIEP (61 aa)) are disordered. Over residues 14 to 57 (QAAESAQSSAAAAGQAASAYSSQAQRASADAQAIAGDEAAVAEA) the composition is skewed to low complexity.

It belongs to the GrpE family. As to quaternary structure, homodimer.

The protein resides in the cytoplasm. Participates actively in the response to hyperosmotic and heat shock by preventing the aggregation of stress-denatured proteins, in association with DnaK and GrpE. It is the nucleotide exchange factor for DnaK and may function as a thermosensor. Unfolded proteins bind initially to DnaJ; upon interaction with the DnaJ-bound protein, DnaK hydrolyzes its bound ATP, resulting in the formation of a stable complex. GrpE releases ADP from DnaK; ATP binding to DnaK triggers the release of the substrate protein, thus completing the reaction cycle. Several rounds of ATP-dependent interactions between DnaJ, DnaK and GrpE are required for fully efficient folding. The polypeptide is Protein GrpE (Ralstonia nicotianae (strain ATCC BAA-1114 / GMI1000) (Ralstonia solanacearum)).